The primary structure comprises 228 residues: uncharacterized protein (228 aa).

Belongs to the HAD-like hydrolase superfamily.

The protein localises to the cytoplasm. Its subcellular location is the nucleus. This is an uncharacterized protein from Schizosaccharomyces pombe (strain 972 / ATCC 24843) (Fission yeast).